Here is a 142-residue protein sequence, read N- to C-terminus: MASLRRRVRAIALQILFELDATDHSPDQVVARRLEEERLPPEGERFLRRLVFGAWEHASYLDRIIEETAPNWPVSQMPGVDKAILRIALFEALIDEEEKTPLKAIINEAVELAKQYGSDNSSRFVNGVLGTVVSRYRERRKG.

The protein belongs to the NusB family.

In terms of biological role, involved in transcription antitermination. Required for transcription of ribosomal RNA (rRNA) genes. Binds specifically to the boxA antiterminator sequence of the ribosomal RNA (rrn) operons. The chain is Transcription antitermination protein NusB from Roseiflexus sp. (strain RS-1).